The following is a 1363-amino-acid chain: Insulin-like peptide receptor (1363 aa).

The signal sequence occupies residues 1–29 (MRVVDKMAGLMWAALTLVIGLGLLVPSNG). Asn51, Asn97, Asn137, Asn278, Asn483, Asn599, Asn617, Asn665, Asn666, Asn711, Asn732, Asn736, Asn743, Asn816, Asn885, and Asn898 each carry an N-linked (GlcNAc...) asparagine glycan. 2 Fibronectin type-III domains span residues 473–586 (SFSR…TDAD) and 590–680 (HPQD…CPKS). Fibronectin type-III domains follow at residues 712–804 (ETRA…LART) and 813–912 (IPGN…VEEE). The Extracellular segment spans residues 721-928 (ELPVTARPFY…QDPQQQVPVS (208 aa)). Positions 739-759 (LPSTNRTVPPTPTPNPNPQLE) are disordered. The chain crosses the membrane as a helical span at residues 929-949 (LMIGMGVGFSLLLILAVIFGI). The Cytoplasmic segment spans residues 950 to 1363 (WYCTKKRFGD…NLRIPKSTLC (414 aa)). A Protein kinase domain is found at 994 to 1283 (ITLIRELGQG…EIVEILSPEL (290 aa)). ATP-binding positions include 1000–1008 (LGQGSFGMV) and Lys1028. A disordered region spans residues 1091-1117 (PEEDVGLSDSPASNEAKNSPFAENDND). Catalysis depends on Asp1148, which acts as the Proton acceptor. The residue at position 1174 (Tyr1174) is a Phosphotyrosine; by autocatalysis. The interval 1316–1363 (DTETEMYPSGSEFSSTPSPPSETPYSHMNGSHPQNGSMNLRIPKSTLC) is disordered. The span at 1322–1331 (YPSGSEFSST) shows a compositional bias: low complexity. Residues 1343-1353 (MNGSHPQNGSM) are compositionally biased toward polar residues.

Belongs to the protein kinase superfamily. Tyr protein kinase family. Insulin receptor subfamily. Probable tetramer of 2 alpha and 2 beta chains linked by disulfide bonds. The alpha chains contribute to the formation of the ligand-binding domain, while the beta chains carry the kinase domain. Mn(2+) serves as cofactor.

Its subcellular location is the membrane. The enzyme catalyses L-tyrosyl-[protein] + ATP = O-phospho-L-tyrosyl-[protein] + ADP + H(+). Functionally, this receptor binds to the insulin related peptide and has a tyrosine-protein kinase activity. The chain is Insulin-like peptide receptor from Branchiostoma lanceolatum (Common lancelet).